A 295-amino-acid polypeptide reads, in one-letter code: Pyridoxal 5'-phosphate synthase subunit PdxS (295 aa).

Asp25 lines the D-ribose 5-phosphate pocket. The active-site Schiff-base intermediate with D-ribose 5-phosphate is the Lys82. Residue Gly154 coordinates D-ribose 5-phosphate. Arg166 contacts D-glyceraldehyde 3-phosphate. D-ribose 5-phosphate is bound by residues Gly215 and Gly236–Ser237.

The protein belongs to the PdxS/SNZ family. In terms of assembly, in the presence of PdxT, forms a dodecamer of heterodimers.

The enzyme catalyses aldehydo-D-ribose 5-phosphate + D-glyceraldehyde 3-phosphate + L-glutamine = pyridoxal 5'-phosphate + L-glutamate + phosphate + 3 H2O + H(+). It participates in cofactor biosynthesis; pyridoxal 5'-phosphate biosynthesis. In terms of biological role, catalyzes the formation of pyridoxal 5'-phosphate from ribose 5-phosphate (RBP), glyceraldehyde 3-phosphate (G3P) and ammonia. The ammonia is provided by the PdxT subunit. Can also use ribulose 5-phosphate and dihydroxyacetone phosphate as substrates, resulting from enzyme-catalyzed isomerization of RBP and G3P, respectively. This is Pyridoxal 5'-phosphate synthase subunit PdxS from Staphylococcus haemolyticus (strain JCSC1435).